We begin with the raw amino-acid sequence, 266 residues long: Dihydropteroate synthase (266 aa).

In terms of domain architecture, Pterin-binding spans 12-260; it reads AAIMGILNVT…DVKANQDIVA (249 aa). A Mg(2+)-binding site is contributed by N19. Residues T59, D93, N112, D176, K212, and 248 to 250 contribute to the (7,8-dihydropterin-6-yl)methyl diphosphate site; that span reads RVH.

It belongs to the DHPS family. As to quaternary structure, homodimer or homotrimer. Requires Mg(2+) as cofactor.

It catalyses the reaction (7,8-dihydropterin-6-yl)methyl diphosphate + 4-aminobenzoate = 7,8-dihydropteroate + diphosphate. It participates in cofactor biosynthesis; tetrahydrofolate biosynthesis; 7,8-dihydrofolate from 2-amino-4-hydroxy-6-hydroxymethyl-7,8-dihydropteridine diphosphate and 4-aminobenzoate: step 1/2. Catalyzes the condensation of para-aminobenzoate (pABA) with 6-hydroxymethyl-7,8-dihydropterin diphosphate (DHPt-PP) to form 7,8-dihydropteroate (H2Pte), the immediate precursor of folate derivatives. The protein is Dihydropteroate synthase (folP) of Streptococcus pyogenes serotype M6 (strain ATCC BAA-946 / MGAS10394).